Here is a 382-residue protein sequence, read N- to C-terminus: MAPTMIATLSSPVGLAQADFQLAGPMKDRRIVVAMSGGVDSSVVAALAARSGAEVIGVTLQLYDHGAKAKRVGACCAGQDIRDARAVADRLGFVHHVHDHESRFRDTVIDQFADEYLAGRTPIPCVRCNMGVKFTDLFQLARELGADCLATGHYVRRVMGPDGAEMHRAVDPARDQSYFLFATTQEQLDFLRFPLGGLEKNVVREIARDLGLGVAGKPDSQDICFVPDGDYASLVRKLRPEAEDQGDIVHVDGTVLGAHKGLIHYTVGQRRGIDIGGQAEPLYVVRLNAATKQVIVGPRRALAVSGARLGDANWLADVEGRDVLAKVRSMAKPVPARVTANRLRFLSPEYGVAPGQAAVLYDAADKSRVLGGGWIEETFTAE.

Residues Ala-34–Ser-41 and Leu-60 each bind ATP. The Nucleophile role is filled by Cys-128. A disulfide bridge links Cys-128 with Cys-224. ATP is bound at residue Gly-152. Positions Arg-174–Gln-176 are interaction with tRNA. Cys-224 (cysteine persulfide intermediate) is an active-site residue.

The protein belongs to the MnmA/TRMU family.

Its subcellular location is the cytoplasm. The catalysed reaction is S-sulfanyl-L-cysteinyl-[protein] + uridine(34) in tRNA + AH2 + ATP = 2-thiouridine(34) in tRNA + L-cysteinyl-[protein] + A + AMP + diphosphate + H(+). In terms of biological role, catalyzes the 2-thiolation of uridine at the wobble position (U34) of tRNA, leading to the formation of s(2)U34. This is tRNA-specific 2-thiouridylase MnmA from Sphingopyxis alaskensis (strain DSM 13593 / LMG 18877 / RB2256) (Sphingomonas alaskensis).